A 59-amino-acid chain; its full sequence is Large ribosomal subunit protein bL32 (59 aa).

Positions 1–16 are enriched in basic residues; the sequence is MAVPKRKTSPSRRGMR. Residues 1–59 form a disordered region; it reads MAVPKRKTSPSRRGMRRSADALKAPTYVEDKNSGELRRPHHIDLKSGMYRGRQVLEPKE. Positions 28-44 are enriched in basic and acidic residues; sequence VEDKNSGELRRPHHIDL.

This sequence belongs to the bacterial ribosomal protein bL32 family.

The polypeptide is Large ribosomal subunit protein bL32 (Brucella abortus (strain S19)).